The chain runs to 280 residues: Phosphonoacetaldehyde hydrolase (280 aa).

Residue Asp-20 is the Nucleophile of the active site. Residues Asp-20 and Ala-22 each contribute to the Mg(2+) site. The active-site Schiff-base intermediate with substrate is the Lys-61. Asp-194 serves as a coordination point for Mg(2+).

This sequence belongs to the HAD-like hydrolase superfamily. PhnX family. Homodimer. The cofactor is Mg(2+).

It carries out the reaction phosphonoacetaldehyde + H2O = acetaldehyde + phosphate + H(+). Functionally, involved in phosphonate degradation. The protein is Phosphonoacetaldehyde hydrolase of Nitratidesulfovibrio vulgaris (strain DSM 19637 / Miyazaki F) (Desulfovibrio vulgaris).